Reading from the N-terminus, the 186-residue chain is NADH-quinone oxidoreductase subunit I (186 aa).

4Fe-4S ferredoxin-type domains lie at 70–100 and 113–142; these read LTTR…IQSA and DRFE…MSKD. [4Fe-4S] cluster-binding residues include C80, C83, C86, C90, C122, C125, C128, and C132.

It belongs to the complex I 23 kDa subunit family. NDH-1 is composed of 14 different subunits. Subunits NuoA, H, J, K, L, M, N constitute the membrane sector of the complex. [4Fe-4S] cluster serves as cofactor.

It is found in the cell inner membrane. The enzyme catalyses a quinone + NADH + 5 H(+)(in) = a quinol + NAD(+) + 4 H(+)(out). Its function is as follows. NDH-1 shuttles electrons from NADH, via FMN and iron-sulfur (Fe-S) centers, to quinones in the respiratory chain. The immediate electron acceptor for the enzyme in this species is believed to be ubiquinone. Couples the redox reaction to proton translocation (for every two electrons transferred, four hydrogen ions are translocated across the cytoplasmic membrane), and thus conserves the redox energy in a proton gradient. The sequence is that of NADH-quinone oxidoreductase subunit I from Pelobacter propionicus (strain DSM 2379 / NBRC 103807 / OttBd1).